Consider the following 428-residue polypeptide: MSKSLQAIRGMNDILPEQTPAWRYLESTLVSLLDGYGYKEIRLPIVEYTELFARGIGEGTDVVDKEMYTFLDRNEESLTLRPEGTAGCVRAVLEHGLAGGGQVQKLWYAGPMFRYEKPQKGRYRQFHQVGVEAFNLPGPDVDAELIVLTWRLWKKLGLADAVTLQLNSLGSSEARAAYRDALVAYLQERFDQLDEDSQRRLTTNPLRILDSKNEATQAVLVGAPTLGDYLDEESRLHFEGVKARLDAAGIRYQINHKLVRGLDYYNRTVFEWVTDKLGAQGTVCAGGRYDGLVAQLGGKATPGVGFAMGVERLVLLLETLDLLPAELNRAADVYVCAFGEAAELAALTLTERLRDELPGLRLLLNSGGGSFKSQFKKADKSGARYALILGDDELAGRVVGCKPLRDDSEQQSVAWDALAEHLAACQQA.

This sequence belongs to the class-II aminoacyl-tRNA synthetase family. Homodimer.

The protein localises to the cytoplasm. It catalyses the reaction tRNA(His) + L-histidine + ATP = L-histidyl-tRNA(His) + AMP + diphosphate + H(+). The polypeptide is Histidine--tRNA ligase (Ectopseudomonas mendocina (strain ymp) (Pseudomonas mendocina)).